Reading from the N-terminus, the 145-residue chain is Deoxyuridine 5'-triphosphate nucleotidohydrolase (145 aa).

Substrate contacts are provided by residues R62–G64, N75, T79–D81, and K89.

Belongs to the dUTPase family. Requires Mg(2+) as cofactor.

It carries out the reaction dUTP + H2O = dUMP + diphosphate + H(+). The protein operates within pyrimidine metabolism; dUMP biosynthesis; dUMP from dCTP (dUTP route): step 2/2. In terms of biological role, this enzyme is involved in nucleotide metabolism: it produces dUMP, the immediate precursor of thymidine nucleotides and it decreases the intracellular concentration of dUTP so that uracil cannot be incorporated into DNA. The polypeptide is Deoxyuridine 5'-triphosphate nucleotidohydrolase (Helicobacter pylori (strain P12)).